Reading from the N-terminus, the 1356-residue chain is Vascular endothelial growth factor receptor 2 (1356 aa).

Positions methionine 1 to alanine 19 are cleaved as a signal peptide. The Extracellular segment spans residues alanine 20–glutamate 764. 6 N-linked (GlcNAc...) asparagine glycosylation sites follow: asparagine 46, asparagine 66, asparagine 96, asparagine 143, asparagine 158, and asparagine 245. Ig-like C2-type domains follow at residues asparagine 46–leucine 110, asparagine 141–glutamate 207, tyrosine 224–threonine 320, proline 328–serine 414, proline 421–threonine 548, proline 551–threonine 660, and proline 667–isoleucine 753. An intrachain disulfide couples cysteine 53 to cysteine 103. Cysteine 150 and cysteine 200 are disulfide-bonded. Cysteine 246 and cysteine 307 are disulfide-bonded. Residues asparagine 318, asparagine 374, asparagine 395, asparagine 511, asparagine 523, asparagine 580, asparagine 613, asparagine 619, asparagine 631, asparagine 675, asparagine 704, and asparagine 721 are each glycosylated (N-linked (GlcNAc...) asparagine). 2 disulfide bridges follow: cysteine 445–cysteine 530 and cysteine 571–cysteine 642. A disulfide bridge links cysteine 688 with cysteine 737. A helical transmembrane segment spans residues isoleucine 765–isoleucine 785. At leucine 786–valine 1356 the chain is on the cytoplasmic side. Position 801 is a phosphotyrosine (tyrosine 801). The Protein kinase domain occupies leucine 834–asparagine 1162. ATP-binding positions include leucine 840 to valine 848 and lysine 868. The residue at position 951 (tyrosine 951) is a Phosphotyrosine; by autocatalysis. Serine 982 and serine 984 each carry phosphoserine. Residue tyrosine 996 is modified to Phosphotyrosine; by autocatalysis. A disulfide bridge connects residues cysteine 1024 and cysteine 1045. The Proton acceptor role is filled by aspartate 1028. Residues tyrosine 1054, tyrosine 1059, tyrosine 1175, and tyrosine 1214 each carry the phosphotyrosine; by autocatalysis modification. Serine 1231 and serine 1235 each carry phosphoserine. Phosphothreonine is present on threonine 1238. The disordered stretch occupies residues aspartate 1274 to valine 1318. The span at serine 1296–tyrosine 1309 shows a compositional bias: polar residues. Phosphotyrosine; by autocatalysis occurs at positions 1305, 1309, and 1319.

It belongs to the protein kinase superfamily. Tyr protein kinase family. CSF-1/PDGF receptor subfamily. In terms of assembly, homodimer in the presence of bound dimeric VEGFA, VEGFC or VEGFD ligands; monomeric in the absence of bound ligands. Can also form heterodimers with FLT1/VEGFR1 and KDR/VEGFR2. Interacts (tyrosine phosphorylated) with LFYN, NCK1, PLCG1. Interacts (tyrosine-phosphorylated active form preferentially) with DAB2IP (via C2 domain and active form preferentially); the interaction occurs at the late phase of VEGFA response and inhibits KDR/VEGFR2 activity. Interacts with SHBSH2D2A/TSAD, GRB2, MYOF, CBL and PDCD6. Interacts (via C-terminus domain) with ERN1 (via kinase domain); the interaction is facilitated in a XBP1 isoform 1- and vascular endothelial growth factor (VEGF)-dependent manner in endothelial cells. Interacts (via juxtamembrane region) with chaperone PDCL3 (via thioredoxin fold region); the interaction leads to increased KDR/VEGFR2 abundance through inhibition of its ubiquitination and degradation. Interacts (tyrosine phosphorylated) with CCDC88A/GIV (via SH2-like region); binding requires autophosphorylation of the KDR/VEGFR2 C-terminal region. Interacts with isoform 2 of BSG. Interacts with SLC31A1; this interaction is induced upon VEGFA stimulation leading to SLC31A1 and KDR subsequent co-internalization to early endosomes, thereby activating KDR downstream signaling in endothelial cells. As to quaternary structure, (Microbial infection) Interacts with HIV-1 Tat. Post-translationally, N-glycosylated. In terms of processing, ubiquitinated. Tyrosine phosphorylation of the receptor promotes its poly-ubiquitination, leading to its degradation via the proteasome or lysosomal proteases. Autophosphorylated on tyrosine residues upon ligand binding. Autophosphorylation occurs in trans, i.e. one subunit of the dimeric receptor phosphorylates tyrosine residues on the other subunit. Phosphorylation at Tyr-951 is important for interaction with SH2D2A/TSAD and VEGFA-mediated reorganization of the actin cytoskeleton. Phosphorylation at Tyr-1175 is important for interaction with PLCG1 and SHB. Phosphorylation at Tyr-1214 is important for interaction with NCK1 and FYN. Dephosphorylated by PTPRB. Dephosphorylated by PTPRJ at Tyr-951, Tyr-996, Tyr-1054, Tyr-1059, Tyr-1175 and Tyr-1214. Post-translationally, the inhibitory disulfide bond between Cys-1024 and Cys-1045 may serve as a specific molecular switch for H(2)S-induced modification that regulates KDR/VEGFR2 function. As to expression, detected in cornea (at protein level). Widely expressed.

Its subcellular location is the cell junction. It is found in the endoplasmic reticulum. It localises to the cell membrane. The protein resides in the cytoplasm. The protein localises to the nucleus. Its subcellular location is the cytoplasmic vesicle. It is found in the early endosome. It localises to the secreted. The enzyme catalyses L-tyrosyl-[protein] + ATP = O-phospho-L-tyrosyl-[protein] + ADP + H(+). With respect to regulation, present in an inactive conformation in the absence of bound ligand. Binding of VEGFA, VEGFC or VEGFD leads to dimerization and activation by autophosphorylation on tyrosine residues. Inhibited by the small molecule PTK inhibitor SU5614 ((3Z)-5-Chloro-3-[(3,5-dimethyl-1H-pyrrol-2-yl)methylene]-1,3-dihydro-2H-indol-2-one). May be regulated by hydrogen sulfide (H(2)S) levels via a H(2)S-sensitive intracellular disulfide bond. Its function is as follows. Tyrosine-protein kinase that acts as a cell-surface receptor for VEGFA, VEGFC and VEGFD. Plays an essential role in the regulation of angiogenesis, vascular development, vascular permeability, and embryonic hematopoiesis. Promotes proliferation, survival, migration and differentiation of endothelial cells. Promotes reorganization of the actin cytoskeleton. Isoforms lacking a transmembrane domain, such as isoform 2 and isoform 3, may function as decoy receptors for VEGFA, VEGFC and/or VEGFD. Isoform 2 plays an important role as negative regulator of VEGFA- and VEGFC-mediated lymphangiogenesis by limiting the amount of free VEGFA and/or VEGFC and preventing their binding to FLT4. Modulates FLT1 and FLT4 signaling by forming heterodimers. Binding of vascular growth factors to isoform 1 leads to the activation of several signaling cascades. Activation of PLCG1 leads to the production of the cellular signaling molecules diacylglycerol and inositol 1,4,5-trisphosphate and the activation of protein kinase C. Mediates activation of MAPK1/ERK2, MAPK3/ERK1 and the MAP kinase signaling pathway, as well as of the AKT1 signaling pathway. Mediates phosphorylation of PIK3R1, the regulatory subunit of phosphatidylinositol 3-kinase, reorganization of the actin cytoskeleton and activation of PTK2/FAK1. Required for VEGFA-mediated induction of NOS2 and NOS3, leading to the production of the signaling molecule nitric oxide (NO) by endothelial cells. Phosphorylates PLCG1. Promotes phosphorylation of FYN, NCK1, NOS3, PIK3R1, PTK2/FAK1 and SRC. The polypeptide is Vascular endothelial growth factor receptor 2 (Homo sapiens (Human)).